A 237-amino-acid polypeptide reads, in one-letter code: Pheromone-regulated membrane protein 8 (237 aa).

Residues 1 to 47 (MQTPSENTNAKSDSLDEPGAYLIEENVALPKDIFHSYLSYWIYEAAH) are Cytoplasmic-facing. A helical transmembrane segment spans residues 48-68 (CTPVMLLSLVIGVLISIIILF). The Extracellular portion of the chain corresponds to 69-74 (HDNENC). Residues 75–95 (VGVSVGFLLIFSGILVIVLIL) form a helical membrane-spanning segment. The Cytoplasmic segment spans residues 96-237 (RFGPQISDED…QEYPGVDEFF (142 aa)). Positions 174–201 (SSASNVKDAQSNDETAGTPNEAAESSSF) are disordered. The segment at 236-237 (FF) is COPII binding.

The protein belongs to the DUP/COS family. Interacts with PRM9. Binds to SEC23/24 of COPII coated vesicles.

It is found in the membrane. Its subcellular location is the endoplasmic reticulum. May be involved in endoplasmic reticulum exit trafficking of proteins. The chain is Pheromone-regulated membrane protein 8 (PRM8) from Saccharomyces cerevisiae (strain ATCC 204508 / S288c) (Baker's yeast).